Reading from the N-terminus, the 263-residue chain is Apolipoprotein A-I (263 aa).

The signal sequence occupies residues 1–18 (MKAVVLAVAVLFLTGSQA). 2 consecutive repeat copies span residues 66-87 (LKLL…SELG) and 88-109 (PVTQ…QEMN). The tract at residues 66-263 (LKLLDNWDTL…DEVSKKLSAQ (198 aa)) is 10 X approximate tandem repeats. Methionine sulfoxide is present on M108. Residues 110-120 (KDLVEVKEKVQ) form a 3; half-length repeat. A run of 5 repeats spans residues 121-142 (PYLK…KKVE), 143-164 (PLGT…EKLT), 165-186 (PLGE…AQLG), 187-206 (PYSD…LKDS), and 207-228 (ASLA…EKAK). The stretch at 229–239 (PALEDLRLGLL) is one 9; half-length repeat. The stretch at 240 to 263 (PVLESLKASFLSSIDEVSKKLSAQ) is repeat 10.

The protein belongs to the apolipoprotein A1/A4/E family. In terms of assembly, homodimer. Interacts with APOA1BP and CLU. Component of a sperm activating protein complex (SPAP), consisting of APOA1, an immunoglobulin heavy chain, an immunoglobulin light chain and albumin. Interacts with NDRG1. Interacts with SCGB3A2. Interacts with NAXE and YJEFN3. Post-translationally, glycosylated. Palmitoylated. In terms of processing, phosphorylation sites are present in the extracellular medium.

It localises to the secreted. Its function is as follows. Participates in the reverse transport of cholesterol from tissues to the liver for excretion by promoting cholesterol efflux from tissues and by acting as a cofactor for the lecithin cholesterol acyltransferase (LCAT). As part of the SPAP complex, activates spermatozoa motility. This chain is Apolipoprotein A-I (APOA1), found in Octodon degus (Degu).